Reading from the N-terminus, the 212-residue chain is Peptide methionine sulfoxide reductase MsrA (212 aa).

Cys52 is a catalytic residue.

This sequence belongs to the MsrA Met sulfoxide reductase family.

The enzyme catalyses L-methionyl-[protein] + [thioredoxin]-disulfide + H2O = L-methionyl-(S)-S-oxide-[protein] + [thioredoxin]-dithiol. The catalysed reaction is [thioredoxin]-disulfide + L-methionine + H2O = L-methionine (S)-S-oxide + [thioredoxin]-dithiol. Has an important function as a repair enzyme for proteins that have been inactivated by oxidation. Catalyzes the reversible oxidation-reduction of methionine sulfoxide in proteins to methionine. This chain is Peptide methionine sulfoxide reductase MsrA, found in Yersinia enterocolitica serotype O:8 / biotype 1B (strain NCTC 13174 / 8081).